Reading from the N-terminus, the 237-residue chain is Peroxisomal membrane protein 11-1 (237 aa).

Over methionine 1–asparagine 92 the chain is Cytoplasmic. The chain crosses the membrane as a helical span at residues alanine 93–tyrosine 113. The Lumenal segment spans residues lysine 114–lysine 204. A helical transmembrane segment spans residues isoleucine 205–tyrosine 223. The Cytoplasmic segment spans residues glutamine 224–alanine 237.

It belongs to the peroxin-11 family. As to expression, expressed in seedlings, leaf sheaths, flag leaf, panicles and spikelets.

The protein localises to the peroxisome membrane. Its function is as follows. Involved in peroxisomal proliferation. In Oryza sativa subsp. japonica (Rice), this protein is Peroxisomal membrane protein 11-1 (PEX11-1).